We begin with the raw amino-acid sequence, 322 residues long: MKIPRINHNDLFAIVIKLRQYIQDNKIDNEINIVDLIDLIDSMIENKTSEIKFDTVTFEIFTDISLIYYTNKISDINIFLDHNFYSRDNEYYTYFALSIGAMDVFKWLISHGFSYDMSKILNYLHKNCGMSIFRKIFDDDFLNMDNSIINNAVKSAYSNEIEEYVDYFIRSNHVVKITRENIIDVIEYAVQINNCDIIKILVKKFIFWANDYRKIFIQAVRNNNFTITKTLLHSIMYRTNKETLIKFNKNEALKYAIMMKNYDMIELLINYNIQTDHVVKYHIEGALDIKNDDHLDKILKYIDEIVCKKCSKKNREVVIIGF.

ANK repeat units lie at residues 88–117 (DNEY…SYDM), 181–210 (NIID…FWAN), and 248–277 (NKNE…QTDH).

The sequence is that of Putative ankyrin repeat protein L897 from Acanthamoeba polyphaga (Amoeba).